We begin with the raw amino-acid sequence, 166 residues long: Lithostathine-1-alpha (166 aa).

Residues 1 to 22 (MAQTSSYFMLISCLMFLSQSQG) form the signal peptide. Q23 is modified (pyrrolidone carboxylic acid). The O-linked (GalNAc) threonine glycan is linked to T27. Residues 34-164 (ISCPEGTNAY…EDKFSFVCKF (131 aa)) enclose the C-type lectin domain. Disulfide bonds link C36/C47, C64/C162, and C137/C154.

Post-translationally, the composition of the O-linked carbohydrate on Thr-27 is complex and varied. In the crystallographic structure, the attached sugar appears to be N-acetylglucosamine, typical of an intracellular protein, rather than N-acetylgalactosamine. As to expression, in pancreatic acinar cells and, in lower levels, in brain. Enhanced expression of PSP-related transcripts and intraneuronal accumulation of PSP-like proteins is found in brain from Alzheimer disease and Down syndrome patients.

It is found in the secreted. Might act as an inhibitor of spontaneous calcium carbonate precipitation. May be associated with neuronal sprouting in brain, and with brain and pancreas regeneration. This chain is Lithostathine-1-alpha (REG1A), found in Homo sapiens (Human).